An 83-amino-acid polypeptide reads, in one-letter code: uncharacterized protein (83 aa).

Helical transmembrane passes span 7–26, 36–58, and 65–82; these read FARF…IVSY, LSPL…ILPF, and ILTV…YLAF.

It localises to the cell membrane. This is an uncharacterized protein from Archaeoglobus fulgidus (strain ATCC 49558 / DSM 4304 / JCM 9628 / NBRC 100126 / VC-16).